The sequence spans 140 residues: Small ribosomal subunit protein bS6 (140 aa).

Residues 111 to 140 are disordered; sequence EHFTGPAGAEGSDDESTESTDEAVAETADA. The segment covering 121–140 has biased composition (acidic residues); that stretch reads GSDDESTESTDEAVAETADA.

Belongs to the bacterial ribosomal protein bS6 family.

In terms of biological role, binds together with bS18 to 16S ribosomal RNA. This Rhodopirellula baltica (strain DSM 10527 / NCIMB 13988 / SH1) protein is Small ribosomal subunit protein bS6.